An 808-amino-acid polypeptide reads, in one-letter code: Putative dimethyl sulfoxide reductase chain YnfE (808 aa).

Residues 1–43 (MSKNERMVGISRRTLVKSTAIGSLALAAGGFSLPFTLRNAAAA) constitute a signal peptide (tat-type signal). In terms of domain architecture, 4Fe-4S Mo/W bis-MGD-type spans 49–110 (EKVVWGACSV…SIRRRINHPD (62 aa)). Residues C56, C60, C64, and C96 each contribute to the [4Fe-4S] cluster site. S196 is a Mo-bis(molybdopterin guanine dinucleotide) binding site.

Belongs to the prokaryotic molybdopterin-containing oxidoreductase family. [4Fe-4S] cluster is required as a cofactor. Requires Mo-bis(molybdopterin guanine dinucleotide) as cofactor. Exported by the Tat system. The position of the signal peptide cleavage has not been experimentally proven.

It is found in the cell membrane. Terminal reductase during anaerobic growth on various sulfoxide and N-oxide compounds. The sequence is that of Putative dimethyl sulfoxide reductase chain YnfE (ynfE) from Escherichia coli (strain K12).